A 196-amino-acid chain; its full sequence is MLNRQAKFERKTSETDILVEVFLDGNGKYQVATGVGFFDHMLCLFAKHGALDLTVKAAGDTHIDDHHTVEDVGITLGQSIKQALGDKQGIVRYGHALVPMDESLILVALDMSGRGHLELDLPLPAAKVGNFDTELVEEFFRALALNCGMTLHVRMLSGRNTHHIIEGAFKALGRALRQAVSKDQRLTGIPSTKGVL.

It belongs to the imidazoleglycerol-phosphate dehydratase family.

It is found in the cytoplasm. The enzyme catalyses D-erythro-1-(imidazol-4-yl)glycerol 3-phosphate = 3-(imidazol-4-yl)-2-oxopropyl phosphate + H2O. Its pathway is amino-acid biosynthesis; L-histidine biosynthesis; L-histidine from 5-phospho-alpha-D-ribose 1-diphosphate: step 6/9. The chain is Imidazoleglycerol-phosphate dehydratase from Desulforamulus reducens (strain ATCC BAA-1160 / DSM 100696 / MI-1) (Desulfotomaculum reducens).